A 464-amino-acid polypeptide reads, in one-letter code: Rab GDP-dissociation inhibitor (464 aa).

The protein belongs to the Rab GDI family. Interacts with the GDP-bound form of Rab GTPase YPT7.

Functionally, regulates the GDP/GTP exchange reaction of YPT7 by inhibiting the dissociation of GDP from it, and the subsequent binding of GTP to YTP7. This chain is Rab GDP-dissociation inhibitor (GDI1), found in Pyricularia oryzae (strain 70-15 / ATCC MYA-4617 / FGSC 8958) (Rice blast fungus).